A 1062-amino-acid polypeptide reads, in one-letter code: MPKRTDIHKIMVIGSGPIIIGQAAEFDYSGTQACLALRDEGYEVVLVNSNPATIMTDTTIADKVYIEPLTVDSVSRIIRQEYPDAILPTLGGQVGLNMALALAKTGILDELHIELLGTKLASIEQAEDREKFKELCQKLGEPVPPSKTVKTVEDALAFGDEIGYPIIVRPAFTMGGTGGGICHNHDELAEIAKNGLELSPVTECLIEKSIAGYKEIEFEVMRDSSDNAMIVCCMENFDPVGIHTGDSIVFSPSQTLSDKEYQMLRDCSLKLIRALKIEGGCNVQLALDPNSLDYDVIEVNPRVSRSSALASKATGYPIAKMAAKIAIGMTLDEIKNPVTGTTYAEFEPALDYVVCKIPRFPFDKFPKADRVLGTQMKATGEVMAIGRTAEEAMQKAVQSLEIDEKDLYSAKAHKASDDEIEQKLVRPQDDRLFYLAEAFRRGYSLEDVHELTKINFYFLDVVKHMVEMEKEIEANPDDLDVLRLAKKYGFSDQTIAKLWHEYPDQVRDLRKANGIVPVYKMVDTCAAEFESTTPYFYSTYDGENESRKSGKKSVIVIGSGPIRIGQGVEFDYATVHSVKALQKMGYEAIVINSNPETVSTDFSVSDKLYFEPLTLEDVLNVCDLEQPEGVIVQFGGQTSINLAAGLERHGVKILGTTVKDLDRAEDREEFDQIIKSLHLHQPQGLTATTHEGVMKAADQLGYPVLVRPSYVLGGKAMEIVYSKDELEEYLHDHADIAEDHPILVDDYLDGRECDVDAISDGKTVLLPGIMEHIEHAGVHSGDSMAVYPPQTFSDEVEEKITDVTKKLALALNCKGIMNIQFIVRDGDVYVIEVNPRASRTVPFLSKITGIEMAQVATRVIMGESLEQQGYADGLAPEPEMISVKAPVFSFSKLADVDSYLGPEMKSTGEVMGSDHTFAKALYKAFAGAKMQLPENGNVLLTIEDRDKEKILPIAKRFARIGYRIFATKGTANFLKKNDLHVELVTKVHEDEQADDNILNELRDGKIDLVINTMGHDIEKNSDGFIIRQMAIQQNVPLLTALDTADALLKSLENRSFATDALK.

Residues Met-1 to Glu-401 are carboxyphosphate synthetic domain. ATP-binding residues include Arg-129, Arg-169, Gly-175, Gly-176, Lys-208, Ile-210, Glu-215, Gly-241, Ile-242, His-243, Gln-284, and Glu-298. The 195-residue stretch at Lys-133–Ile-327 folds into the ATP-grasp 1 domain. Residues Gln-284, Glu-298, and Asn-300 each coordinate Mg(2+). 3 residues coordinate Mn(2+): Gln-284, Glu-298, and Asn-300. Residues Ile-402–Ser-546 form an oligomerization domain region. The segment at Arg-547–Lys-929 is carbamoyl phosphate synthetic domain. Residues Asp-671 to Met-861 form the ATP-grasp 2 domain. Residues Arg-707, Asp-746, Leu-748, Glu-752, Gly-777, Val-778, His-779, Ser-780, Gln-820, and Glu-832 each coordinate ATP. Gln-820, Glu-832, and Asn-834 together coordinate Mg(2+). Mn(2+)-binding residues include Gln-820, Glu-832, and Asn-834. In terms of domain architecture, MGS-like spans Met-930–Lys-1062. The allosteric domain stretch occupies residues Met-930 to Lys-1062.

This sequence belongs to the CarB family. In terms of assembly, composed of two chains; the small (or glutamine) chain promotes the hydrolysis of glutamine to ammonia, which is used by the large (or ammonia) chain to synthesize carbamoyl phosphate. Tetramer of heterodimers (alpha,beta)4. Mg(2+) serves as cofactor. It depends on Mn(2+) as a cofactor.

It carries out the reaction hydrogencarbonate + L-glutamine + 2 ATP + H2O = carbamoyl phosphate + L-glutamate + 2 ADP + phosphate + 2 H(+). The enzyme catalyses hydrogencarbonate + NH4(+) + 2 ATP = carbamoyl phosphate + 2 ADP + phosphate + 2 H(+). The protein operates within amino-acid biosynthesis; L-arginine biosynthesis; carbamoyl phosphate from bicarbonate: step 1/1. It participates in pyrimidine metabolism; UMP biosynthesis via de novo pathway; (S)-dihydroorotate from bicarbonate: step 1/3. Its function is as follows. Large subunit of the glutamine-dependent carbamoyl phosphate synthetase (CPSase). CPSase catalyzes the formation of carbamoyl phosphate from the ammonia moiety of glutamine, carbonate, and phosphate donated by ATP, constituting the first step of 2 biosynthetic pathways, one leading to arginine and/or urea and the other to pyrimidine nucleotides. The large subunit (synthetase) binds the substrates ammonia (free or transferred from glutamine from the small subunit), hydrogencarbonate and ATP and carries out an ATP-coupled ligase reaction, activating hydrogencarbonate by forming carboxy phosphate which reacts with ammonia to form carbamoyl phosphate. The protein is Carbamoyl phosphate synthase large chain of Lactobacillus helveticus (strain DPC 4571).